Consider the following 483-residue polypeptide: Krueppel-like factor 4 (483 aa).

A disordered region spans residues 22 to 42 (TFASGPAGREKTLRPAGAPTN). A Glycyl lysine isopeptide (Lys-Gly) (interchain with G-Cter in ubiquitin) cross-link involves residue K32. The 9aaTAD signature appears at 99-107 (DLLDLDFIL). A Phosphoserine modification is found at S251. A disordered region spans residues 294–395 (AGPQLSNGHR…KRGRRSWPRK (102 aa)). Residues 338–356 (LPLPPGFHPHPGPNYPPFL) show a composition bias toward pro residues. E381 is modified (5-glutamyl polyglutamate). Basic residues predominate over residues 386–395 (KRGRRSWPRK). Residues 386 to 483 (KRGRRSWPRK…HLALHMKRHF (98 aa)) form an interaction with ZNF296 region. 3 C2H2-type zinc fingers span residues 400-424 (HTCD…LRTH), 430-454 (YHCD…YRKH), and 460-482 (FQCQ…MKRH). The interval 443 to 474 (RSDELTRHYRKHTGHRPFQCQKCDRAFSRSDH) is interaction with target DNA.

Belongs to the krueppel C2H2-type zinc-finger protein family. In terms of assembly, interacts with MUC1 (via the C-terminal domain). Interacts with POU5F1/OCT4 and SOX2. Interacts with MEIS2 isoform MeisD and PBX1 isoform PBX1a. Interacts with ZNF296. Interacts with GLIS1. Interacts with BTRC; this interaction leads to KLF4 ubiquitination and subsequent degradation. Interacts with IPO7; the interaction facilitates nuclear translocation of KLF4 in dental papilla cells. Post-translationally, ubiquitinated. 'Lys-48'-linked ubiquitinated and targeted for proteasomal degradation by the SCF(BTRC) E3 ubiquitin-protein ligase complex, thereby negatively regulating cell pluripotency maintenance and embryogenesis. In terms of processing, polyglutamylated by TTLL1 and TTLL4 at Glu-381, which inhibits KLF4 binding with E3 ligase component BTRC, thereby impeding ubiquitination. Deglutamylated by CCP1 and CCP6; deglutamylation promotes KLF4 ubiquitination. KLF4 glutamylation state plays a critical role in the regulation of its function in cell reprogramming, pluripotency maintenance and embryogenesis. Highest expression in the colon. Lower levels in testis, lung and small intestine.

It is found in the nucleus. It localises to the cytoplasm. In terms of biological role, transcription factor; can act both as activator and as repressor. Binds the 5'-CACCC-3' core sequence. Binds to the promoter region of its own gene and can activate its own transcription. Regulates the expression of key transcription factors during embryonic development. Plays an important role in maintaining embryonic stem cells, and in preventing their differentiation. Required for establishing the barrier function of the skin and for postnatal maturation and maintenance of the ocular surface. Involved in the differentiation of epithelial cells and may also function in skeletal and kidney development. Contributes to the down-regulation of p53/TP53 transcription. This is Krueppel-like factor 4 (Klf4) from Mus musculus (Mouse).